Reading from the N-terminus, the 255-residue chain is Small ribosomal subunit protein eS1A (255 aa).

Over residues 1 to 18 (MAVGKNKRLSKGKKGQKK) the composition is skewed to basic residues. The disordered stretch occupies residues 1–20 (MAVGKNKRLSKGKKGQKKRV). A2 carries the post-translational modification N-acetylalanine; partial. T245 is modified (phosphothreonine). Residue K248 forms a Glycyl lysine isopeptide (Lys-Gly) (interchain with G-Cter in ubiquitin) linkage. Residue T254 is modified to Phosphothreonine.

Belongs to the eukaryotic ribosomal protein eS1 family. As to quaternary structure, component of the small ribosomal subunit. Mature ribosomes consist of a small (40S) and a large (60S) subunit. The 40S subunit contains about 33 different proteins and 1 molecule of RNA (18S). The 60S subunit contains about 49 different proteins and 3 molecules of RNA (25S, 5.8S and 5S).

The protein resides in the cytoplasm. The polypeptide is Small ribosomal subunit protein eS1A (Saccharomyces cerevisiae (strain RM11-1a) (Baker's yeast)).